Reading from the N-terminus, the 243-residue chain is HTH-type quorum sensing-dependent transcriptional regulator RpaR (243 aa).

The 66-residue stretch at 174 to 239 (KPIRRNRLTP…AAVAKALTLG (66 aa)) folds into the HTH luxR-type domain. Residues 198–217 (AWEISVILCITERTVKFHLI) constitute a DNA-binding region (H-T-H motif).

It belongs to the autoinducer-regulated transcriptional regulatory protein family.

Functionally, responds to the quorum-sensing autoinducer 4-coumaroyl-homoserine lactone to regulate expression of several genes. Represses expression of rpaI in the absence of the inducer. The polypeptide is HTH-type quorum sensing-dependent transcriptional regulator RpaR (Rhodopseudomonas palustris (strain ATCC BAA-98 / CGA009)).